We begin with the raw amino-acid sequence, 200 residues long: Acyl-homoserine-lactone synthase (200 aa).

The protein belongs to the autoinducer synthase family.

It carries out the reaction a fatty acyl-[ACP] + S-adenosyl-L-methionine = an N-acyl-L-homoserine lactone + S-methyl-5'-thioadenosine + holo-[ACP] + H(+). Required for the synthesis of BHL (N-butanoyl-L-homoserine lactone). The protein is Acyl-homoserine-lactone synthase (swrI) of Serratia liquefaciens.